A 547-amino-acid chain; its full sequence is MTSSPATPSAVDDAPDWPAAFVRRYLDAGHWQDQNFAEALAASAARHPRRIALCDDDQRLSYADLLQRCRRLAAGLRQAGLAHGDTVVLHLPNGIAFVETCFALFQLGVRPVLALPAHRQHEISGFCRFAEAKAYIGAERIDGFDPRPMARELLASGACRMALIHGEAEAPLQALAPLYQADALEDCAARAEDIACFQLSGGTTGTPKLIPRRHREYLYNVRASAEVCGFDEHTVYLTGLPMAHNFTLCCPGVIGTLLAGGRVVVSQRADPEHCFALIARERVTHTALVPPLAMLWLDAQESRRADLSSLRLLQVGGSRLGSSAAQRVEPVLGCQLQQVLGMAEGLICYTRLDDPPERVLHTQGRPLSPDDEVRVVDAEGREVGPGEVGELTVRGPYTIRGYYRLPEHNAKAFSADGFYRTGDRVSRDKDGYLVVEGRDKDQINRGGEKIAAEEVENLLIAHPQVHDATVVAMPDSLLGERTCAFVIPRQPAPSALKLKQYLHACGLAAFKVPDRIELVPAFPQTGIGKISKKDLRERLRRELEARA.

Belongs to the ATP-dependent AMP-binding enzyme family.

The catalysed reaction is salicylate + holo-[ACP] + ATP = salicyl-[ACP] + AMP + diphosphate. The protein operates within siderophore biosynthesis. It participates in antifungal biosynthesis. Involved in the biosynthesis of the siderophore pyochelin. Specifically adenylates salicylate and loads it onto the holo form of PchE via a thioester linkage to the phosphopanthetheine moiety. Is also involved in the synthesis of the antifungal antibiotic dihydroaeruginoic acid (Dha or hydroxyphenyl-thiazolinyl-carboxylate), a precursor of pyochelin. The chain is Pyochelin synthase PchD from Pseudomonas aeruginosa (strain UCBPP-PA14).